The following is a 303-amino-acid chain: MKPFTFYEAIEANKRKTWIIIFVISILLFLVCYAIVSYFELGEFGILVAFLMVFFVNYYAYKNSDEIILKYSGVREPTKEEFPYLLNVVEGLSIAAGIPTPKIYVMDDPSPNAFATGKDPKSGVVVVTKGLLDLLDRLELEGVIAHEISHIKNYDVRLQTVAAVMVGLIVILGDSLKRSFYYSRRRRDKDENILGIVSLVIAILAPFLATLLKFALSRQREYMADANAAMLTRYPEGLASALEKISKNFQPVKRANTMTAPLYIVNPLKGGMSNLFSTHPPIEDRIRRLRMMGERWKLLDKEG.

2 helical membrane-spanning segments follow: residues 19-39 and 41-61; these read IIIF…VSYF and LGEF…YYAY. H146 serves as a coordination point for Zn(2+). E147 is a catalytic residue. Residue H150 participates in Zn(2+) binding. 2 consecutive transmembrane segments (helical) span residues 156-176 and 192-212; these read VRLQ…GDSL and NILG…ATLL. E221 is a binding site for Zn(2+).

It belongs to the peptidase M48B family. It depends on Zn(2+) as a cofactor.

The protein localises to the cell inner membrane. The chain is Protease HtpX homolog from Dictyoglomus thermophilum (strain ATCC 35947 / DSM 3960 / H-6-12).